The chain runs to 302 residues: tRNA pseudouridine synthase B (302 aa).

The active-site Nucleophile is Asp-45.

This sequence belongs to the pseudouridine synthase TruB family. Type 1 subfamily.

The catalysed reaction is uridine(55) in tRNA = pseudouridine(55) in tRNA. In terms of biological role, responsible for synthesis of pseudouridine from uracil-55 in the psi GC loop of transfer RNAs. In Francisella tularensis subsp. holarctica (strain FTNF002-00 / FTA), this protein is tRNA pseudouridine synthase B.